The primary structure comprises 186 residues: Translation initiation factor IF-3 (186 aa).

It belongs to the IF-3 family. As to quaternary structure, monomer.

Its subcellular location is the cytoplasm. IF-3 binds to the 30S ribosomal subunit and shifts the equilibrium between 70S ribosomes and their 50S and 30S subunits in favor of the free subunits, thus enhancing the availability of 30S subunits on which protein synthesis initiation begins. The polypeptide is Translation initiation factor IF-3 (Borreliella burgdorferi (strain ATCC 35210 / DSM 4680 / CIP 102532 / B31) (Borrelia burgdorferi)).